A 32-amino-acid chain; its full sequence is Calcitonin (32 aa).

A disulfide bond links Cys-1 and Cys-7. The residue at position 32 (Pro-32) is a Proline amide.

Belongs to the calcitonin family.

It is found in the secreted. In terms of biological role, calcitonin is a peptide hormone that causes a rapid but short-lived drop in the level of calcium and phosphate in blood by promoting the incorporation of those ions in the bones. Calcitonin function is mediated by the calcitonin receptor/CALCR and the CALCR-RAMP2 (AMYR2) receptor complex. The sequence is that of Calcitonin (CALCA) from Bos taurus (Bovine).